The following is a 141-amino-acid chain: Large ribosomal subunit protein uL16 (141 aa).

The protein belongs to the universal ribosomal protein uL16 family. Part of the 50S ribosomal subunit.

In terms of biological role, binds 23S rRNA and is also seen to make contacts with the A and possibly P site tRNAs. The polypeptide is Large ribosomal subunit protein uL16 (Geobacillus thermodenitrificans (strain NG80-2)).